The chain runs to 790 residues: MPLRNQNRAPLPSPNVKKEALSSIPFDKRRKETQGTGRRQVLSTVNRQDANSDVGSTEECGKVEFTKDEVLALLNERAKAGKFDTKGKIEQMTDIIKKLKVCVRWYQQVDETHVQDKENLSSSLQSAEKRYSDKELDAKTKEEELRATITEMKENIESLQEKLSKEKLSKLDAIENHRREKDCRVVAEKLQVSLREELDKVKEEKMAAKQKVTSLEDMYKRLQEYNTSLQQYNTKLQTDLEVAREAHTRAEKEKSSILENLTTLRGHSKSLQDQLASSRVSQDEAVKQKDSLLMEVNNLQSELQQVRDDRDRHVVQSQKLAGEILMYKESVGKSSHELDILIAKSGSLEETCSLQKERIKMLEQELAFAKEKLKMVDLSMSHTMTEFEEQKQCMHELQDRLADTERQLFEGELLRKKLHNTILELKGNIRVFCRVRPLLPDDGGRQEASVIAYPTSTESLGRGIDVVQSGNKHPFTFDKVFDHGASQEEVFFEISQLVQSALDGYKVCIFAYGQTGSGKTYTMMGRPETPEQKGLIPRSLEQIFKTSQSLSTQGWKYKMQVSMLEIYNESIRDLLSTSRTIAIESVRADSSTSGRQYTITHDVNGNTHVSDLTIVDVCSIGQISSLLQQAAQSRSVGKTHMNEQSSRSHFVFTLRISGVNESTEQQVQGVLNLIDLAGSERLSRSGATGDRLKETQAINKSLSALSDVIFALAKKEDHVPFRNSKLTYLLQPCLGGDSKTLMFVNISPDPSSTGESLCSLRFAARVNACEIGIPRRQTSAKLLDSRLSYG.

2 disordered regions span residues 1-56 (MPLR…DVGS) and 116-139 (DKEN…LDAK). A globular region spans residues 1 to 66 (MPLRNQNRAP…TEECGKVEFT (66 aa)). Residues 16-33 (VKKEALSSIPFDKRRKET) show a composition bias toward basic and acidic residues. The segment covering 34–55 (QGTGRRQVLSTVNRQDANSDVG) has biased composition (polar residues). 2 coiled-coil regions span residues 117–316 (KENL…HVVQ) and 347–426 (SLEE…LELK). Residues 127–139 (AEKRYSDKELDAK) show a composition bias toward basic and acidic residues. The Kinesin motor domain occupies 428-769 (NIRVFCRVRP…LRFAARVNAC (342 aa)). ATP is bound at residue 513 to 520 (GQTGSGKT).

The protein belongs to the TRAFAC class myosin-kinesin ATPase superfamily. Kinesin family. KIN-14 subfamily. Slightly expressed in anther lobes with pollen mother cells at anther stage 5. Strongly expressed at anther stage 6 in the tapetum and meiotic cells. Also detected in the gynoecium and the ovule.

The protein localises to the cytoplasm. Its subcellular location is the cytoskeleton. It localises to the phragmoplast. Kinesin that supports microtubule movement in an ATP-dependent manner and that functions as a minus-end directed motor as well as a plus-end tracking protein. During mitosis, is involved in early spindle assembly. Participates in the capture of antiparallel interpolar microtubules and helps in generating force to coalign microtubules. The polypeptide is Kinesin-like protein KIN-14D (Arabidopsis thaliana (Mouse-ear cress)).